A 355-amino-acid chain; its full sequence is MDNERQKALDTVIKNMEKSFGKGAVMKLGDNKARRVSSISSGSVTLDNALGVGGYPKGRIVEIYGPESSGKTTVALHAIAEVQKQGGVAAFIDAEHALDPVYAEALGVDIDNLYLSQPDHGEQGLEIAEAFVRSGAVDIIVVDSVAALTPKAEIEGEMGDTHVGLQARLMSQALRKLSGAISKSNCTAVFINQIREKVGVMFGNPETTPGGRALKFYSSVRLEVRRAEQLKQGQEIVGNRTKIKVVKNKVAPPFRVAEVDIMYGQGISKEGELIDLGVENDIVDKSGAWYSYNGDRMGQGKENVKNYLKEHPEIKQDIDNKLRQKLGIFDGDIEEKDEKQAEAEKNENTNLFDEE.

ATP is bound at residue 65–72 (GPESSGKT). A disordered region spans residues 333–355 (IEEKDEKQAEAEKNENTNLFDEE). Over residues 336-347 (KDEKQAEAEKNE) the composition is skewed to basic and acidic residues.

This sequence belongs to the RecA family.

It is found in the cytoplasm. Its function is as follows. Can catalyze the hydrolysis of ATP in the presence of single-stranded DNA, the ATP-dependent uptake of single-stranded DNA by duplex DNA, and the ATP-dependent hybridization of homologous single-stranded DNAs. It interacts with LexA causing its activation and leading to its autocatalytic cleavage. The chain is Protein RecA from Staphylococcus carnosus (strain TM300).